The primary structure comprises 312 residues: MEFHHIPVLLEEVLEALQPRPDGLYLDGTVGGGGHSAAILEKTAGQGRLIGLDQDPRALAAARIKLEKFADQVTLVRSNFRQLGSVVEELGQKGKIDGILLDIGVSSHQLDEAERGFTYRAEAPLDMRMNPDGAVTAAQILNEYPEGEIFRILWEYGEERWSKRIAQFIVNRRTEQPLASTTDLVDVIRAAIPAAARQEGGHPAKRTFQALRIAVNDELGALQEALPAALDALAPSGRLAVISFHSLEDRIVKNFFAEQAKGCTCPPDMPVCGCGKKARLKIITRKPITGSEEELKINPRSQSAKLRVAQKI.

S-adenosyl-L-methionine is bound by residues 33–35 (GGH), Asp-53, Phe-80, Asp-102, and Gln-109.

This sequence belongs to the methyltransferase superfamily. RsmH family.

The protein localises to the cytoplasm. It catalyses the reaction cytidine(1402) in 16S rRNA + S-adenosyl-L-methionine = N(4)-methylcytidine(1402) in 16S rRNA + S-adenosyl-L-homocysteine + H(+). Functionally, specifically methylates the N4 position of cytidine in position 1402 (C1402) of 16S rRNA. The sequence is that of Ribosomal RNA small subunit methyltransferase H from Heliobacterium mobile (Heliobacillus mobilis).